Consider the following 147-residue polypeptide: 3-hydroxyacyl-[acyl-carrier-protein] dehydratase FabZ (147 aa).

Residue His-46 is part of the active site.

It belongs to the thioester dehydratase family. FabZ subfamily.

Its subcellular location is the cytoplasm. It carries out the reaction a (3R)-hydroxyacyl-[ACP] = a (2E)-enoyl-[ACP] + H2O. In terms of biological role, involved in unsaturated fatty acids biosynthesis. Catalyzes the dehydration of short chain beta-hydroxyacyl-ACPs and long chain saturated and unsaturated beta-hydroxyacyl-ACPs. The chain is 3-hydroxyacyl-[acyl-carrier-protein] dehydratase FabZ from Syntrophobacter fumaroxidans (strain DSM 10017 / MPOB).